The chain runs to 317 residues: Type II restriction enzyme NaeI (317 aa).

In terms of assembly, homodimer.

It catalyses the reaction Endonucleolytic cleavage of DNA to give specific double-stranded fragments with terminal 5'-phosphates.. Functionally, an E and P subtype restriction enzyme that recognizes the double-stranded unmethylated sequence 5'-GCCGGC-3' and cleaves after C-3. The protein is Type II restriction enzyme NaeI of Lentzea aerocolonigenes (Lechevalieria aerocolonigenes).